Here is a 114-residue protein sequence, read N- to C-terminus: Large ribosomal subunit protein uL22 (114 aa).

The protein belongs to the universal ribosomal protein uL22 family. In terms of assembly, part of the 50S ribosomal subunit.

Its function is as follows. This protein binds specifically to 23S rRNA; its binding is stimulated by other ribosomal proteins, e.g. L4, L17, and L20. It is important during the early stages of 50S assembly. It makes multiple contacts with different domains of the 23S rRNA in the assembled 50S subunit and ribosome. The globular domain of the protein is located near the polypeptide exit tunnel on the outside of the subunit, while an extended beta-hairpin is found that lines the wall of the exit tunnel in the center of the 70S ribosome. This is Large ribosomal subunit protein uL22 from Streptococcus thermophilus (strain CNRZ 1066).